A 223-amino-acid chain; its full sequence is ATP phosphoribosyltransferase (223 aa).

Belongs to the ATP phosphoribosyltransferase family. Short subfamily. Heteromultimer composed of HisG and HisZ subunits.

The protein localises to the cytoplasm. The enzyme catalyses 1-(5-phospho-beta-D-ribosyl)-ATP + diphosphate = 5-phospho-alpha-D-ribose 1-diphosphate + ATP. It functions in the pathway amino-acid biosynthesis; L-histidine biosynthesis; L-histidine from 5-phospho-alpha-D-ribose 1-diphosphate: step 1/9. Catalyzes the condensation of ATP and 5-phosphoribose 1-diphosphate to form N'-(5'-phosphoribosyl)-ATP (PR-ATP). Has a crucial role in the pathway because the rate of histidine biosynthesis seems to be controlled primarily by regulation of HisG enzymatic activity. The protein is ATP phosphoribosyltransferase of Novosphingobium aromaticivorans (strain ATCC 700278 / DSM 12444 / CCUG 56034 / CIP 105152 / NBRC 16084 / F199).